The following is a 775-amino-acid chain: Glutamine--tRNA ligase (775 aa).

The residue at position 2 (alanine 2) is an N-acetylalanine. Serine 70 carries the phosphoserine modification. ATP-binding positions include 271-273 and 277-283; these read EPN and HIGHAKA. Residue aspartate 303 coordinates L-glutamine. Lysine 309 is subject to N6-acetyllysine. Tyrosine 438 is an L-glutamine binding site. Residues threonine 457, 486–487, and 494–496 each bind ATP; these read RL and VSK. Phosphoserine is present on serine 495.

The protein belongs to the class-I aminoacyl-tRNA synthetase family. As to quaternary structure, monomer. Part of a multisubunit complex that groups tRNA ligases for Arg (RARS1), Asp (DARS1), Gln (QARS1), Ile (IARS1), Leu (LARS1), Lys (KARS1), Met (MARS1) the bifunctional ligase for Glu and Pro (EPRS1) and the auxiliary subunits AIMP1/p43, AIMP2/p38 and EEF1E1/p18. Interacts with RARS1. Part of a complex composed of RARS1, QARS1 and AIMP1. Detected in dorsal root ganglia (at protein level). Detected in dorsal root ganglia.

The protein localises to the cytoplasm. The protein resides in the cytosol. The enzyme catalyses tRNA(Gln) + L-glutamine + ATP = L-glutaminyl-tRNA(Gln) + AMP + diphosphate. In terms of biological role, glutamine--tRNA ligase. Plays a critical role in brain development. This is Glutamine--tRNA ligase (Qars1) from Rattus norvegicus (Rat).